The chain runs to 408 residues: Peptidase T (408 aa).

Residue His78 coordinates Zn(2+). The active site involves Asp80. Asp140 is a binding site for Zn(2+). Catalysis depends on Glu173, which acts as the Proton acceptor. Residues Glu174, Asp196, and His379 each coordinate Zn(2+).

This sequence belongs to the peptidase M20B family. Zn(2+) serves as cofactor.

The protein localises to the cytoplasm. It carries out the reaction Release of the N-terminal residue from a tripeptide.. Functionally, cleaves the N-terminal amino acid of tripeptides. The sequence is that of Peptidase T from Salmonella arizonae (strain ATCC BAA-731 / CDC346-86 / RSK2980).